The following is a 431-amino-acid chain: MLALLAASVALAVAAGAQDSPAPGSRFVCTALPPEAVHAGCPLPAMPMQGGAQSPEEELRAAVLQLRETVVQQKETLGAQREAIRELTGKLARCEGLAGGKARGAGATGKDTMGDLPRDPGHVVEQLSRSLQTLKDRLESLEHQLRANVSNAGLPGDFREVLQQRLGELERQLLRKVAELEDEKSLLHNETSAHRQKTESTLNALLQRVTELERGNSAFKSPDAFKVSLPLRTNYLYGKIKKTLPELYAFTICLWLRSSASPGIGTPFSYAVPGQANEIVLIEWGNNPIELLINDKVAQLPLFVSDGKWHHICVTWTTRDGMWEAFQDGEKLGTGENLAPWHPIKPGGVLILGQEQDTVGGRFDATQAFVGELSQFNIWDRVLRAQEIVNIANCSTNMPGNIIPWVDNNVDVFGGASKWPVETCEERLLDL.

A signal peptide spans 1 to 15 (MLALLAASVALAVAA). Asn-148 and Asn-189 each carry an N-linked (GlcNAc...) asparagine glycan. Positions 223–424 (DAFKVSLPLR…GASKWPVETC (202 aa)) constitute a Pentraxin (PTX) domain. The cysteines at positions 253 and 313 are disulfide-linked. The Ca(2+) site is built by Asn-277, Glu-355, Gln-356, Asp-357, and Gln-367. A glycan (N-linked (GlcNAc...) asparagine) is linked at Asn-393.

As to quaternary structure, homooligomer or heterooligomer (probably pentamer) with neuronal pentraxin receptor (NPTXR). Requires Ca(2+) as cofactor. As to expression, brain, pancreas, liver, heart and skeletal muscle. Highest levels are seen in the testis.

Its subcellular location is the secreted. Likely to play role in the modification of cellular properties that underlie long-term plasticity. Binds to agar matrix in a calcium-dependent manner. This is Neuronal pentraxin-2 (NPTX2) from Homo sapiens (Human).